A 196-amino-acid polypeptide reads, in one-letter code: Protein hunchback (196 aa).

Disordered stretches follow at residues 16–56 (SHHH…SHTN), 63–82 (LKQQQQQQQQHQHQQQQQPM), and 156–196 (LTPP…KYMA). Basic residues predominate over residues 17–29 (HHHHHHHAHHSHH). Low complexity-rich tracts occupy residues 33-43 (SNSNASNSPHQ) and 65-80 (QQQQQQQQHQHQQQQQ). Residues 177-196 (EPEKEHDLMSNSSEDMKYMA) are compositionally biased toward basic and acidic residues.

The protein belongs to the hunchback C2H2-type zinc-finger protein family.

The protein localises to the nucleus. Gap class segmentation protein that controls development of head structures. The sequence is that of Protein hunchback (hb) from Drosophila adunca (Fruit fly).